The sequence spans 65 residues: Weak neurotoxin 7 (65 aa).

Cystine bridges form between Cys-3/Cys-24, Cys-6/Cys-11, Cys-17/Cys-42, Cys-46/Cys-57, and Cys-58/Cys-63.

The protein belongs to the three-finger toxin family. Ancestral subfamily. Orphan group II sub-subfamily. Expressed by the venom gland.

The protein resides in the secreted. Functionally, binds with low affinity to muscular (alpha-1-beta-1-delta-epsilon/CHRNA1-CHRNB1-CHRND-CHRNE) and very low affinity to neuronal (alpha-7/CHRNA7) nicotinic acetylcholine receptor (nAChR). The protein is Weak neurotoxin 7 of Naja naja (Indian cobra).